The following is a 426-amino-acid chain: Elongation factor 1-alpha (426 aa).

The tr-type G domain occupies 5–221; it reads KPHINLAVIG…NALKEPEKPT (217 aa). A G1 region spans residues 14–21; that stretch reads GHIDHGKS. 14 to 21 provides a ligand contact to GTP; it reads GHIDHGKS. Serine 21 contacts Mg(2+). The segment at 70–74 is G2; the sequence is GITID. Residues 91–94 are G3; that stretch reads DCPG. GTP contacts are provided by residues 91–95 and 146–149; these read DCPGH and NKMD. Residues 146 to 149 form a G4 region; sequence NKMD. A G5 region spans residues 185 to 187; that stretch reads SAF.

Belongs to the TRAFAC class translation factor GTPase superfamily. Classic translation factor GTPase family. EF-Tu/EF-1A subfamily.

It is found in the cytoplasm. It catalyses the reaction GTP + H2O = GDP + phosphate + H(+). GTP hydrolase that promotes the GTP-dependent binding of aminoacyl-tRNA to the A-site of ribosomes during protein biosynthesis. In Methanocella arvoryzae (strain DSM 22066 / NBRC 105507 / MRE50), this protein is Elongation factor 1-alpha.